Here is a 252-residue protein sequence, read N- to C-terminus: Transcriptional regulatory protein HptR (252 aa).

Positions 3–118 (KVVICDDERI…QLEVILGRLV (116 aa)) constitute a Response regulatory domain. Position 55 is a 4-aspartylphosphate (D55). Positions 153–250 (NQIVDQIKQS…QMAPSDYCKQ (98 aa)) constitute an HTH araC/xylS-type domain. 2 consecutive DNA-binding regions (H-T-H motif) follow at residues 170 to 191 (SDLI…KDHV) and 217 to 240 (HYEI…KKYL).

In terms of processing, phosphorylated by HptS.

It localises to the cytoplasm. In terms of biological role, member of the two-component regulatory system HptS/HptR that regulates genes involved in hexose phosphate transport system in response to changes in extracellular phosphate sources. Activates uhpT expression to facilitate glucose-6-phosphate/G6P utilization by directly binding to its promoter. Antagonizes CcpA-dependent transcription of a subset of CcpA-regulated genes involved in antibiotic susceptibility. The chain is Transcriptional regulatory protein HptR (hptR) from Staphylococcus aureus (strain bovine RF122 / ET3-1).